Reading from the N-terminus, the 177-residue chain is MSRVGKKPIAVPSGVDFSVKDNVVTVKGPKGTLTKEFNNNITIKLEDGHITVERPNDEPFMRAIHGTTRALINNMVKGVHEGYRKTLTLVGVGYRAATKGKGLEISLGYSHPVIIDEIPGITFSVEKNTTIHIDGVEKELVGQVAANIRAKRPPEPYKGKGVKYADEHIRRKEGKKS.

Residues 151–177 (KRPPEPYKGKGVKYADEHIRRKEGKKS) form a disordered region. A compositionally biased stretch (basic and acidic residues) spans 152-177 (RPPEPYKGKGVKYADEHIRRKEGKKS).

This sequence belongs to the universal ribosomal protein uL6 family. As to quaternary structure, part of the 50S ribosomal subunit.

Its function is as follows. This protein binds to the 23S rRNA, and is important in its secondary structure. It is located near the subunit interface in the base of the L7/L12 stalk, and near the tRNA binding site of the peptidyltransferase center. This chain is Large ribosomal subunit protein uL6, found in Fusobacterium nucleatum subsp. nucleatum (strain ATCC 25586 / DSM 15643 / BCRC 10681 / CIP 101130 / JCM 8532 / KCTC 2640 / LMG 13131 / VPI 4355).